Here is a 394-residue protein sequence, read N- to C-terminus: Phloroisovalerophenone synthase (394 aa).

Residue cysteine 166 is part of the active site.

Belongs to the thiolase-like superfamily. Chalcone/stilbene synthases family. As to quaternary structure, homodimer. Expressed in lupulin gland. Present at low levels in leaves but accumulates in cones.

The enzyme catalyses 3-methylbutanoyl-CoA + 3 malonyl-CoA + 3 H(+) = phlorisovalerophenone + 3 CO2 + 4 CoA. The catalysed reaction is (E)-4-coumaroyl-CoA + 3 malonyl-CoA + 3 H(+) = 2',4,4',6'-tetrahydroxychalcone + 3 CO2 + 4 CoA. It carries out the reaction 2-methylpropanoyl-CoA + 3 malonyl-CoA + 3 H(+) = phlorisobutanophenone + 3 CO2 + 4 CoA. Its pathway is secondary metabolite biosynthesis. Its function is as follows. Involved in the biosynthesis of prenylated phenolics natural products which contribute to the bitter taste of beer and display broad biological activities. Polyketide synthase that can use 3-methylbutanoyl-CoA (isovaleryl-CoA) and 2-methylpropanoyl-CoA (isobutyryl-CoA) as substrates to produce phlorisovalerophenone (PIVP) and phlorisobutyrophenone (2-methyl-1-(2,4,6-trihydroxyphenyl)propan-1-one), respectively, intermediates in the biosynthesis of the bitter acids (alpha and beta) acids. Can also produce naringenin-chalcone (2',4,4',6'-tetrahydroxychalcone) from 4-coumaroyl-CoA with a lower efficiency. This Humulus lupulus (European hop) protein is Phloroisovalerophenone synthase.